Consider the following 346-residue polypeptide: Alkylated DNA repair protein ALKBH8 homolog (346 aa).

The disordered stretch occupies residues 1-21 (MVQPRFVRPTQSSPSSISGEP). Residues 12–21 (SSPSSISGEP) show a composition bias toward low complexity. The RRM domain maps to 24 to 102 (SNLYVANCGP…RSLHIRYSVL (79 aa)). One can recognise a Fe2OG dioxygenase domain in the interval 208–328 (NLDQLTVNEY…RVSFTLRKVR (121 aa)). 3 residues coordinate Fe cation: H226, D228, and H298. R319 and R325 together coordinate 2-oxoglutarate.

This sequence belongs to the alkB family. It depends on Fe(2+) as a cofactor.

In terms of biological role, binds tRNA and catalyzes the iron and alpha-ketoglutarate dependent hydroxylation of 5-methylcarboxymethyl uridine at the wobble position of the anticodon loop in tRNA via its dioxygenase domain, giving rise to 5-(S)-methoxycarbonylhydroxymethyluridine. The polypeptide is Alkylated DNA repair protein ALKBH8 homolog (Arabidopsis thaliana (Mouse-ear cress)).